The chain runs to 637 residues: Protein kinase domain-containing protein ppk3 (637 aa).

Positions 1–296 (MDFIKSAASF…QLLSSKLEVI (296 aa)) constitute a Protein kinase domain. The HEAT repeat unit spans residues 414-450 (KTLNNELLRSLAVVQNDQHPTLRTNSTICLGKIAEYL). Residues 576–586 (NDTTEIKEKKN) are compositionally biased toward basic and acidic residues. The segment at 576–637 (NDTTEIKEKK…ENNVEESWGL (62 aa)) is disordered. A compositionally biased stretch (acidic residues) spans 608 to 631 (ETEEQIDESWMENWNDEEETENNV).

It localises to the golgi apparatus. This chain is Protein kinase domain-containing protein ppk3 (ppk3), found in Schizosaccharomyces pombe (strain 972 / ATCC 24843) (Fission yeast).